A 501-amino-acid chain; its full sequence is ADP,ATP carrier protein 3 (501 aa).

The next 12 membrane-spanning stretches (helical) occupy residues 23-43 (LKLF…FGAL), 59-79 (IISF…TILY), 90-110 (YIFY…AYII), 146-166 (YALM…LMFW), 183-203 (PVLG…LVFF), 227-247 (IMLQ…MFLF), 293-313 (IALL…PWKA), 326-346 (VNFM…FMII), 361-381 (LLTP…IIFI), 383-403 (EIGT…VGAI), 446-466 (FGKS…PTAT), and 470-490 (IIIY…WNII).

The protein belongs to the ADP/ATP translocase tlc family.

The protein resides in the cell membrane. Provides the rickettsial cell with host ATP in exchange for rickettsial ADP. This is an obligate exchange system. This energy acquiring activity is an important component of rickettsial parasitism. In Rickettsia prowazekii (strain Madrid E), this protein is ADP,ATP carrier protein 3 (tlcC).